The sequence spans 336 residues: uncharacterized protein (336 aa).

An ATP-grasp domain is found at 123 to 323 (KTLMRDSGVP…YSSLINGILD (201 aa)).

It belongs to the D-alanine--D-alanine ligase family.

Could be involved in the biosynthesis of a cell wall component. This is an uncharacterized protein from Sinorhizobium fredii (strain NBRC 101917 / NGR234).